The following is a 562-amino-acid chain: Oligo-1,6-glucosidase (562 aa).

Ca(2+) is bound by residues Asp21, Asn23, Asp25, and Asp29. The Nucleophile role is filled by Asp199. Catalysis depends on Glu256, which acts as the Proton donor.

Belongs to the glycosyl hydrolase 13 family.

The protein localises to the cytoplasm. The enzyme catalyses Hydrolysis of (1-&gt;6)-alpha-D-glucosidic linkages in some oligosaccharides produced from starch and glycogen by alpha-amylase, and in isomaltose.. This is Oligo-1,6-glucosidase (malL) from Parageobacillus thermoglucosidasius (Geobacillus thermoglucosidasius).